The primary structure comprises 406 residues: Tryptophan synthase beta chain (406 aa).

Lys-99 carries the N6-(pyridoxal phosphate)lysine modification.

Belongs to the TrpB family. In terms of assembly, tetramer of two alpha and two beta chains. It depends on pyridoxal 5'-phosphate as a cofactor.

The catalysed reaction is (1S,2R)-1-C-(indol-3-yl)glycerol 3-phosphate + L-serine = D-glyceraldehyde 3-phosphate + L-tryptophan + H2O. It functions in the pathway amino-acid biosynthesis; L-tryptophan biosynthesis; L-tryptophan from chorismate: step 5/5. The beta subunit is responsible for the synthesis of L-tryptophan from indole and L-serine. This chain is Tryptophan synthase beta chain, found in Methylobacterium sp. (strain 4-46).